The chain runs to 417 residues: MSSAFDFEPQPRRASVAVDVGGVIVGGGAPVVVQSMTNTDTADIDATVAQVAALHKAGSELVRITVDRDESAAAVPKIRERLLRLGLDVPLVGDFHYIGHKLLADHPACAEALAKYRINPGNVGFKDKKDKQFAEIVEMAIRYDKPVRIGVNWGSLDQELLTRLMDANKANGFPLTAQQVTRETIVQSALLSAELAEELGLPRNRIILSAKVSGVQDLIAVYAMLSARSDHALHLGLTEAGMGTKGIVASSASLGILMQQGIGDTIRISLTPEPGGDRTREVQVAQELLQVMGFRQFIPVVAACPGCGRTTSTVFQELAQKIQEDIRSSMPVWREKYPGVEALKVAVMGCIVNGPGESKHADIGISLPGTGEMPAAPVFIDGHKAMTLRGPKIAEDFQLLVADYIEKRFGHGQAAAE.

[4Fe-4S] cluster contacts are provided by C304, C307, C350, and E357.

This sequence belongs to the IspG family. Requires [4Fe-4S] cluster as cofactor.

The enzyme catalyses (2E)-4-hydroxy-3-methylbut-2-enyl diphosphate + oxidized [flavodoxin] + H2O + 2 H(+) = 2-C-methyl-D-erythritol 2,4-cyclic diphosphate + reduced [flavodoxin]. It functions in the pathway isoprenoid biosynthesis; isopentenyl diphosphate biosynthesis via DXP pathway; isopentenyl diphosphate from 1-deoxy-D-xylulose 5-phosphate: step 5/6. Functionally, converts 2C-methyl-D-erythritol 2,4-cyclodiphosphate (ME-2,4cPP) into 1-hydroxy-2-methyl-2-(E)-butenyl 4-diphosphate. This is 4-hydroxy-3-methylbut-2-en-1-yl diphosphate synthase (flavodoxin) from Sinorhizobium medicae (strain WSM419) (Ensifer medicae).